Here is a 61-residue protein sequence, read N- to C-terminus: Metallothionein-2 (61 aa).

An N-acetylmethionine modification is found at M1. The tract at residues M1 to C29 is beta. Residues C5, C7, C13, C15, C19, C21, C24, C26, C29, C33, C34, C36, C37, C41, C44, C48, C50, and C57 each coordinate a divalent metal cation. Residues K30–A61 form an alpha region. A Phosphoserine modification is found at S58. A divalent metal cation-binding residues include C59 and C60.

It belongs to the metallothionein superfamily. Type 1 family. Interacts with EOLA1.

Its function is as follows. Metallothioneins have a high content of cysteine residues that bind various heavy metals; these proteins are transcriptionally regulated by both heavy metals and glucocorticoids. The sequence is that of Metallothionein-2 (MT2A) from Ovis aries (Sheep).